Reading from the N-terminus, the 610-residue chain is UvrABC system protein C (610 aa).

In terms of domain architecture, GIY-YIG spans 16–94; it reads SQPGVYRMYD…IKLYQPRYNV (79 aa). Residues 204-239 enclose the UVR domain; sequence DQVLTQLIARMEKASQDLAFEEAARIRDQIQAVRRV.

The protein belongs to the UvrC family. Interacts with UvrB in an incision complex.

It is found in the cytoplasm. In terms of biological role, the UvrABC repair system catalyzes the recognition and processing of DNA lesions. UvrC both incises the 5' and 3' sides of the lesion. The N-terminal half is responsible for the 3' incision and the C-terminal half is responsible for the 5' incision. In Salmonella typhi, this protein is UvrABC system protein C.